Reading from the N-terminus, the 185-residue chain is Ribonuclease M5 (185 aa).

In terms of domain architecture, Toprim spans 3–84; the sequence is KEVIVVEGRD…KHARISQSEG (82 aa). Positions 9, 55, and 57 each coordinate Mg(2+).

It belongs to the ribonuclease M5 family. Requires Mg(2+) as cofactor.

The protein localises to the cytoplasm. The catalysed reaction is Endonucleolytic cleavage of RNA, removing 21 and 42 nucleotides, respectively, from the 5'- and 3'-termini of a 5S-rRNA precursor.. Functionally, required for correct processing of both the 5' and 3' ends of 5S rRNA precursor. Cleaves both sides of a double-stranded region yielding mature 5S rRNA in one step. This Clostridium acetobutylicum (strain ATCC 824 / DSM 792 / JCM 1419 / IAM 19013 / LMG 5710 / NBRC 13948 / NRRL B-527 / VKM B-1787 / 2291 / W) protein is Ribonuclease M5.